The sequence spans 297 residues: uncharacterized protein (297 aa).

Residues Val-175–Lys-199 are disordered. Residues Leu-176–Arg-185 show a composition bias toward polar residues. An N-linked (GlcNAc...) asparagine; by host glycan is attached at Asn-269. The chain crosses the membrane as a helical span at residues Leu-277 to Leu-297.

This sequence belongs to the ascovirus HvAV ORF18 family.

The protein resides in the membrane. This is an uncharacterized protein from Noctuidae (owlet moths).